Consider the following 159-residue polypeptide: NADH-quinone oxidoreductase subunit I (159 aa).

4Fe-4S ferredoxin-type domains follow at residues 51 to 80 (RRYENGEERCIACKLCEAVCPAQAIVIESD) and 90 to 119 (TRYDIDMTKCIYCGLCQEACPVDAIVEGPN). Residues C60, C63, C66, C70, C99, C102, C105, and C109 each contribute to the [4Fe-4S] cluster site.

This sequence belongs to the complex I 23 kDa subunit family. In terms of assembly, NDH-1 is composed of 14 different subunits. Subunits NuoA, H, J, K, L, M, N constitute the membrane sector of the complex. It depends on [4Fe-4S] cluster as a cofactor.

Its subcellular location is the cell inner membrane. The enzyme catalyses a quinone + NADH + 5 H(+)(in) = a quinol + NAD(+) + 4 H(+)(out). NDH-1 shuttles electrons from NADH, via FMN and iron-sulfur (Fe-S) centers, to quinones in the respiratory chain. The immediate electron acceptor for the enzyme in this species is believed to be ubiquinone. Couples the redox reaction to proton translocation (for every two electrons transferred, four hydrogen ions are translocated across the cytoplasmic membrane), and thus conserves the redox energy in a proton gradient. This is NADH-quinone oxidoreductase subunit I from Rickettsia typhi (strain ATCC VR-144 / Wilmington).